A 396-amino-acid polypeptide reads, in one-letter code: Period circadian protein (396 aa).

Disordered regions lie at residues 27 to 120, 167 to 188, 253 to 275, and 333 to 362; these read VTAP…APPV, SGPG…WEGE, GGNG…QYTQ, and SPSS…TSQA. Gly residues predominate over residues 93-114; sequence GTSGTGNSGDGGGGGGANGTGS. Positions 253 to 262 are enriched in gly residues; that stretch reads GGNGNVGSGN. A compositionally biased stretch (low complexity) spans 333–342; sequence SPSSTNTNPN.

Forms a heterodimer with timeless (TIM); the complex then translocates into the nucleus. Phosphorylated with a circadian rhythmicity, probably by the double-time protein (dbt). Phosphorylation could be implicated in the stability of per monomer and in the formation of heterodimer per-tim.

It localises to the nucleus. Its subcellular location is the cytoplasm. The protein localises to the perinuclear region. Its function is as follows. Essential for biological clock functions. Determines the period length of circadian and ultradian rhythms; an increase in PER dosage leads to shortened circadian rhythms and a decrease leads to lengthened circadian rhythms. Essential for the circadian rhythmicity of locomotor activity, eclosion behavior, and for the rhythmic component of the male courtship song that originates in the thoracic nervous system. The biological cycle depends on the rhythmic formation and nuclear localization of the TIM-PER complex. Light induces the degradation of TIM, which promotes elimination of PER. Nuclear activity of the heterodimer coordinatively regulates PER and TIM transcription through a negative feedback loop. Behaves as a negative element in circadian transcriptional loop. Does not appear to bind DNA, suggesting indirect transcriptional inhibition. The protein is Period circadian protein (per) of Drosophila paulistorum (Fruit fly).